We begin with the raw amino-acid sequence, 144 residues long: 3-hydroxyacyl-[acyl-carrier-protein] dehydratase FabZ (144 aa).

The active site involves histidine 48.

It belongs to the thioester dehydratase family. FabZ subfamily.

The protein resides in the cytoplasm. The enzyme catalyses a (3R)-hydroxyacyl-[ACP] = a (2E)-enoyl-[ACP] + H2O. In terms of biological role, involved in unsaturated fatty acids biosynthesis. Catalyzes the dehydration of short chain beta-hydroxyacyl-ACPs and long chain saturated and unsaturated beta-hydroxyacyl-ACPs. This Bacillus anthracis (strain A0248) protein is 3-hydroxyacyl-[acyl-carrier-protein] dehydratase FabZ.